A 552-amino-acid chain; its full sequence is Dihydroxy-acid dehydratase (552 aa).

D78 is a Mg(2+) binding site. C119 serves as a coordination point for [2Fe-2S] cluster. Mg(2+) contacts are provided by D120 and K121. Residue K121 is modified to N6-carboxylysine. Residue C191 participates in [2Fe-2S] cluster binding. E442 is a binding site for Mg(2+). Catalysis depends on S468, which acts as the Proton acceptor.

It belongs to the IlvD/Edd family. As to quaternary structure, homodimer. [2Fe-2S] cluster serves as cofactor. The cofactor is Mg(2+).

It catalyses the reaction (2R)-2,3-dihydroxy-3-methylbutanoate = 3-methyl-2-oxobutanoate + H2O. The enzyme catalyses (2R,3R)-2,3-dihydroxy-3-methylpentanoate = (S)-3-methyl-2-oxopentanoate + H2O. It functions in the pathway amino-acid biosynthesis; L-isoleucine biosynthesis; L-isoleucine from 2-oxobutanoate: step 3/4. It participates in amino-acid biosynthesis; L-valine biosynthesis; L-valine from pyruvate: step 3/4. Functions in the biosynthesis of branched-chain amino acids. Catalyzes the dehydration of (2R,3R)-2,3-dihydroxy-3-methylpentanoate (2,3-dihydroxy-3-methylvalerate) into 2-oxo-3-methylpentanoate (2-oxo-3-methylvalerate) and of (2R)-2,3-dihydroxy-3-methylbutanoate (2,3-dihydroxyisovalerate) into 2-oxo-3-methylbutanoate (2-oxoisovalerate), the penultimate precursor to L-isoleucine and L-valine, respectively. The protein is Dihydroxy-acid dehydratase of Clostridium botulinum (strain Alaska E43 / Type E3).